Here is a 150-residue protein sequence, read N- to C-terminus: Transcriptional repressor NrdR (150 aa).

Residues Cys-3–Cys-34 fold into a zinc finger. One can recognise an ATP-cone domain in the interval Pro-49 to Glu-139.

Belongs to the NrdR family. Requires Zn(2+) as cofactor.

In terms of biological role, negatively regulates transcription of bacterial ribonucleotide reductase nrd genes and operons by binding to NrdR-boxes. This Geobacter sulfurreducens (strain ATCC 51573 / DSM 12127 / PCA) protein is Transcriptional repressor NrdR.